The primary structure comprises 95 residues: Beta-defensin 132 (95 aa).

The N-terminal stretch at 1 to 22 is a signal peptide; sequence MKFLLLVLAALGFLTQVIPASG. 3 disulfide bridges follow: C27–C55, C35–C49, and C39–C56. Residues 72–95 form a disordered region; that stretch reads GNHWPSRSRNTQRKNKKQQTTVTP.

This sequence belongs to the beta-defensin family.

The protein resides in the secreted. Its function is as follows. Has antibacterial activity. This Macaca fascicularis (Crab-eating macaque) protein is Beta-defensin 132 (DEFB132).